The sequence spans 158 residues: NADH-quinone oxidoreductase subunit B (158 aa).

[4Fe-4S] cluster-binding residues include C37, C38, C102, and C132.

Belongs to the complex I 20 kDa subunit family. As to quaternary structure, NDH-1 is composed of 14 different subunits. Subunits NuoB, C, D, E, F, and G constitute the peripheral sector of the complex. [4Fe-4S] cluster serves as cofactor.

It is found in the cell inner membrane. It catalyses the reaction a quinone + NADH + 5 H(+)(in) = a quinol + NAD(+) + 4 H(+)(out). NDH-1 shuttles electrons from NADH, via FMN and iron-sulfur (Fe-S) centers, to quinones in the respiratory chain. Couples the redox reaction to proton translocation (for every two electrons transferred, four hydrogen ions are translocated across the cytoplasmic membrane), and thus conserves the redox energy in a proton gradient. This Methylobacillus flagellatus (strain ATCC 51484 / DSM 6875 / VKM B-1610 / KT) protein is NADH-quinone oxidoreductase subunit B.